Here is a 436-residue protein sequence, read N- to C-terminus: MGQVLPLVTRQGDRIAIVSGLRTPFARQATAFHGIPAVDLGKMVVGELLARSEIPAEVIEQLVFGQVVQMPEAPNIAREIVLGTGMNVHTDAYSVSRACATSFQAVANVAESLMAGTIRAGIAGGADSSSVLPIGVSKKLARVLVDVNKARTMSQRLKLFSRLRLRDLMPVPPAVAEYSTGLRMGDTAEQMAKTYGITREQQDALAHRSHQRAAQSWSEGKLKEEVMTAFIPPYKQLLAEDNNICGNSSLADYAKLRPAFDRKHGTVTAANSTPLTDGAAAVILMTESRTKELGLVPLGYLRSYAFTAIDVWQDMLLGPAWSTPLALERAGLTMADLTLIDMHEAFAAQTLANIQLLGSERFACNVLGRAHATGEVDDSKFNVLGGSIAYGHPFAATGARIITQTLHELRRRGGGFGLVTACAAGGLGAAMVLEAE.

Cysteine 99 acts as the Acyl-thioester intermediate in catalysis. Active-site proton acceptor residues include histidine 392 and cysteine 422.

It belongs to the thiolase-like superfamily. Thiolase family. Heterotetramer of two alpha chains (FadJ) and two beta chains (FadI).

It is found in the cytoplasm. It carries out the reaction an acyl-CoA + acetyl-CoA = a 3-oxoacyl-CoA + CoA. It participates in lipid metabolism; fatty acid beta-oxidation. Catalyzes the final step of fatty acid oxidation in which acetyl-CoA is released and the CoA ester of a fatty acid two carbons shorter is formed. In Shigella dysenteriae serotype 1 (strain Sd197), this protein is 3-ketoacyl-CoA thiolase.